The primary structure comprises 251 residues: Triosephosphate isomerase (251 aa).

A substrate-binding site is contributed by 9 to 11; the sequence is NWK. Residue His95 is the Electrophile of the active site. Residue Glu167 is the Proton acceptor of the active site. Residues Gly173, Ser213, and 234-235 contribute to the substrate site; that span reads GG. Residue Ser213 is modified to Phosphoserine.

Belongs to the triosephosphate isomerase family. As to quaternary structure, homodimer.

It is found in the cytoplasm. The enzyme catalyses D-glyceraldehyde 3-phosphate = dihydroxyacetone phosphate. The protein operates within carbohydrate biosynthesis; gluconeogenesis. It participates in carbohydrate degradation; glycolysis; D-glyceraldehyde 3-phosphate from glycerone phosphate: step 1/1. Functionally, involved in the gluconeogenesis. Catalyzes stereospecifically the conversion of dihydroxyacetone phosphate (DHAP) to D-glyceraldehyde-3-phosphate (G3P). The chain is Triosephosphate isomerase from Bacillus anthracis.